We begin with the raw amino-acid sequence, 460 residues long: 3-isopropylmalate dehydratase large subunit (460 aa).

[4Fe-4S] cluster contacts are provided by Cys-338, Cys-398, and Cys-401.

The protein belongs to the aconitase/IPM isomerase family. LeuC type 1 subfamily. Heterodimer of LeuC and LeuD. [4Fe-4S] cluster serves as cofactor.

The enzyme catalyses (2R,3S)-3-isopropylmalate = (2S)-2-isopropylmalate. Its pathway is amino-acid biosynthesis; L-leucine biosynthesis; L-leucine from 3-methyl-2-oxobutanoate: step 2/4. Its function is as follows. Catalyzes the isomerization between 2-isopropylmalate and 3-isopropylmalate, via the formation of 2-isopropylmaleate. This chain is 3-isopropylmalate dehydratase large subunit, found in Streptococcus thermophilus (strain ATCC BAA-250 / LMG 18311).